A 296-amino-acid chain; its full sequence is Peroxidase P7 (296 aa).

A Pyrrolidone carboxylic acid modification is found at Gln-1. 4 disulfides stabilise this stretch: Cys-11–Cys-91, Cys-44–Cys-49, Cys-97–Cys-292, and Cys-176–Cys-201. The active-site Proton acceptor is the His-42. Residues Asp-43, Val-46, Gly-48, Asp-50, and Ser-52 each contribute to the Ca(2+) site. A substrate-binding site is contributed by Pro-139. A heme b-binding site is contributed by His-169. Thr-170 is a Ca(2+) binding site. N-linked (GlcNAc...) asparagine glycosylation is present at Asn-185. Ca(2+) contacts are provided by Asp-216, Ser-219, and Asp-224.

Belongs to the peroxidase family. Classical plant (class III) peroxidase subfamily. Ca(2+) serves as cofactor. It depends on heme b as a cofactor.

It catalyses the reaction 2 a phenolic donor + H2O2 = 2 a phenolic radical donor + 2 H2O. Its function is as follows. Removal of H(2)O(2), oxidation of toxic reductants, biosynthesis and degradation of lignin, suberization, auxin catabolism, response to environmental stresses such as wounding, pathogen attack and oxidative stress. These functions might be dependent on each isozyme/isoform in each plant tissue. The chain is Peroxidase P7 from Brassica rapa subsp. rapa (Turnip).